We begin with the raw amino-acid sequence, 660 residues long: Acetyl-coenzyme A synthetase (660 aa).

CoA is bound by residues 197-200 (RGGK) and Thr-317. ATP is bound by residues 397–399 (GEP), 421–426 (DTFWQT), Asp-512, and Arg-528. Ser-536 contributes to the CoA binding site. Residue Arg-539 participates in ATP binding. Mg(2+) is bound by residues Val-550 and Val-555. Lys-625 carries the N6-acetyllysine modification.

It belongs to the ATP-dependent AMP-binding enzyme family. Requires Mg(2+) as cofactor. In terms of processing, acetylated. Deacetylation by the SIR2-homolog deacetylase activates the enzyme.

The enzyme catalyses acetate + ATP + CoA = acetyl-CoA + AMP + diphosphate. Functionally, catalyzes the conversion of acetate into acetyl-CoA (AcCoA), an essential intermediate at the junction of anabolic and catabolic pathways. AcsA undergoes a two-step reaction. In the first half reaction, AcsA combines acetate with ATP to form acetyl-adenylate (AcAMP) intermediate. In the second half reaction, it can then transfer the acetyl group from AcAMP to the sulfhydryl group of CoA, forming the product AcCoA. This Cupriavidus pinatubonensis (strain JMP 134 / LMG 1197) (Cupriavidus necator (strain JMP 134)) protein is Acetyl-coenzyme A synthetase.